The sequence spans 1232 residues: Chromosome-associated kinesin KIF4A (1232 aa).

The region spanning 9–336 (PVRVALRCRP…LRYADRARKI (328 aa)) is the Kinesin motor domain. 88–95 (GQTGSGKT) serves as a coordination point for ATP. Residues 350 to 999 (ELNHLKQQVQ…IKQKLTLLQV (650 aa)) are a coiled coil. Position 394 is a phosphoserine (S394). The disordered stretch occupies residues 496 to 515 (AQVETSPETSRSSDAFTTQH). Residues 497–515 (QVETSPETSRSSDAFTTQH) show a composition bias toward polar residues. Residues 663 to 1232 (QWKQKKDKEV…GCSPIEEEAH (570 aa)) are required for the interaction with PRC1. The Nuclear localization signal motif lies at 793 to 798 (PKLRRR). Phosphothreonine is present on T799. S801, S810, S815, and S951 each carry phosphoserine. T995 bears the Phosphothreonine mark. Residues 1000–1232 (ASRQKHLPKD…GCSPIEEEAH (233 aa)) are globular. Residues S1001, S1013, S1017, S1028, and S1126 each carry the phosphoserine modification. Positions 1086–1144 (CSCKGWCGNKQCGCRKQKSDCGVDCCCDPTKCRNRQQGKDSLGTVERTQDSEGSFKLED) are CRD; required for [4Fe-4S] cluster binding and localization to the spindle midzone and midbody during anaphase and telophase. The interval 1122–1142 (QGKDSLGTVERTQDSEGSFKL) is disordered. A compositionally biased stretch (basic and acidic residues) spans 1132 to 1142 (RTQDSEGSFKL). A Phosphothreonine modification is found at T1181. A Phosphoserine modification is found at S1186. A Glycyl lysine isopeptide (Lys-Gly) (interchain with G-Cter in SUMO2) cross-link involves residue K1194. Phosphoserine is present on S1225.

Belongs to the TRAFAC class myosin-kinesin ATPase superfamily. Kinesin family. Chromokinesin subfamily. As to quaternary structure, interacts with the cytosolic iron-sulfur protein assembly (CIA) complex components CIAO2B and MMS19; the interactions facilitate the transfer of Fe-S clusters to KIF4A to ensure proper localization of KIF4A to mitotic machinery components. Interacts (via C-terminus) with unphosphorylated PRC1 (via N-terminus); the interaction is required for the progression of mitosis. The cofactor is [2Fe-2S] cluster. It depends on [4Fe-4S] cluster as a cofactor. As to expression, highly expressed in hematopoietic tissues, fetal liver, spleen, thymus and adult thymus and bone marrow. Lower levels are found in heart, testis, kidney, colon and lung.

The protein resides in the nucleus matrix. Its subcellular location is the cytoplasm. It localises to the cytoskeleton. The protein localises to the spindle. It is found in the midbody. The protein resides in the chromosome. Functionally, iron-sulfur (Fe-S) cluster binding motor protein that has a role in chromosome segregation during mitosis. Translocates PRC1 to the plus ends of interdigitating spindle microtubules during the metaphase to anaphase transition, an essential step for the formation of an organized central spindle midzone and midbody and for successful cytokinesis. May play a role in mitotic chromosomal positioning and bipolar spindle stabilization. The chain is Chromosome-associated kinesin KIF4A (KIF4A) from Homo sapiens (Human).